Consider the following 505-residue polypeptide: Lysine--tRNA ligase (505 aa).

The Mg(2+) site is built by Glu-415 and Glu-422.

The protein belongs to the class-II aminoacyl-tRNA synthetase family. As to quaternary structure, homodimer. Mg(2+) is required as a cofactor.

Its subcellular location is the cytoplasm. The enzyme catalyses tRNA(Lys) + L-lysine + ATP = L-lysyl-tRNA(Lys) + AMP + diphosphate. The polypeptide is Lysine--tRNA ligase (Escherichia coli O157:H7).